The sequence spans 806 residues: Volume-regulated anion channel subunit LRRC8E (806 aa).

At 1-22 (MIPVAEFKQFTEQQPAFKVLKP) the chain is on the cytoplasmic side. The chain crosses the membrane as a helical span at residues 23–43 (WWDVLAEYITYAMLMIGVFGC). At 44–130 (TLQVTQDKII…YETALHWYAK (87 aa)) the chain is on the extracellular side. A disulfide bond links C54 and C311. N57 and N80 each carry an N-linked (GlcNAc...) asparagine glycan. Over residues 72 to 81 (YDQQSPPSND) the composition is skewed to polar residues. The tract at residues 72 to 103 (YDQQSPPSNDSDLETTIPPPTATSSPPREMSG) is disordered. Residues 131 to 151 (YFPYLVVIHTLIFIICGNFWF) traverse the membrane as a helical segment. Over 152-275 (KFPGTSSKIE…MRQTVLKVCK (124 aa)) the chain is Cytoplasmic. The disordered stretch occupies residues 182–213 (EVSGESSQEKPSQERSIDRELSKPNFEEGSPA). The segment covering 188–207 (SQEKPSQERSIDRELSKPNF) has biased composition (basic and acidic residues). The chain crosses the membrane as a helical span at residues 276–296 (FVLITIYNAVLVGKIHFIVPC). Residues 297-323 (SVHTEDMTGYNSFCCNHTKAHLFSKLA) lie on the Extracellular side of the membrane. N312 is a glycosylation site (N-linked (GlcNAc...) asparagine). Residues 324–344 (ITYLCFLGVYGLTCLYTLYWL) form a helical membrane-spanning segment. Over 345 to 806 (FRRPLKEYSF…VEVRDKLKED (462 aa)) the chain is Cytoplasmic. LRR repeat units follow at residues 544 to 566 (LKSLKVLTIKSNLSKIPATVADV), 569 to 589 (HLQKFSIHNDGTKLLTLNALK), 593 to 614 (LVKELELVRCELERIPHAVFSL), 616 to 637 (NLQVLDLKENTLHTIEEIISLQ), 641 to 662 (KLSVLRLWHNQIAYIPEHIRKL), 664 to 685 (GLEELSLNRNKILVIPSQLFLC), 687 to 708 (KLRHLDLSNNEIRELPPEIGVL), 710 to 731 (LLQYLGLSGNFLEDLPNELFFC), 733 to 754 (KLKTLKLGQNRLGNLSPKVGSL), and 756 to 777 (CLVKLELKGNRMDTLPPELGNC).

This sequence belongs to the LRRC8 family. In terms of assembly, heterohexamer; oligomerizes with other LRRC8 proteins (lrrc8a, lrrc8c, lrrc8d and/or lrrc8b) to form a heterohexamer. Detected in a channel complex that contains lrrc8a, lrrc8c and lrrc8e. In vivo, the subunit composition may depend primarily on expression levels, and heterooligomeric channels containing various proportions of the different LRRC8 proteins may coexist.

The protein localises to the cell membrane. It is found in the endoplasmic reticulum membrane. It localises to the lysosome membrane. It catalyses the reaction chloride(in) = chloride(out). The catalysed reaction is iodide(out) = iodide(in). It carries out the reaction taurine(out) = taurine(in). The enzyme catalyses 2',3'-cGAMP(out) = 2',3'-cGAMP(in). Its function is as follows. Non-essential component of the volume-regulated anion channel (VRAC, also named VSOAC channel), an anion channel required to maintain a constant cell volume in response to extracellular or intracellular osmotic changes. The VRAC channel conducts iodide better than chloride and can also conduct organic osmolytes like taurine. Mediates efflux of amino acids, such as aspartate, in response to osmotic stress. The VRAC channel also mediates transport of immunoreactive cyclic dinucleotide GMP-AMP (2'-3'-cGAMP), an immune messenger produced in response to DNA virus in the cytosol. Channel activity requires lrrc8a plus at least one other family member (lrrc8b, lrrc8c, lrrc8d or lrrc8e); channel characteristics depend on the precise subunit composition. Also plays a role in lysosome homeostasis by forming functional lysosomal VRAC channels in response to low cytoplasmic ionic strength condition: lysosomal VRAC channels are necessary for the formation of large lysosome-derived vacuoles, which store and then expel excess water to maintain cytosolic water homeostasis. The sequence is that of Volume-regulated anion channel subunit LRRC8E from Xenopus tropicalis (Western clawed frog).